The following is a 276-amino-acid chain: 4-diphosphocytidyl-2-C-methyl-D-erythritol kinase (276 aa).

Residue Lys-13 is part of the active site. Residue 94 to 104 (PHAGGIGGGSA) participates in ATP binding. Residue Asp-131 is part of the active site.

Belongs to the GHMP kinase family. IspE subfamily.

It carries out the reaction 4-CDP-2-C-methyl-D-erythritol + ATP = 4-CDP-2-C-methyl-D-erythritol 2-phosphate + ADP + H(+). It participates in isoprenoid biosynthesis; isopentenyl diphosphate biosynthesis via DXP pathway; isopentenyl diphosphate from 1-deoxy-D-xylulose 5-phosphate: step 3/6. Its function is as follows. Catalyzes the phosphorylation of the position 2 hydroxy group of 4-diphosphocytidyl-2C-methyl-D-erythritol. This is 4-diphosphocytidyl-2-C-methyl-D-erythritol kinase from Jannaschia sp. (strain CCS1).